The following is a 185-amino-acid chain: Probable DNA-directed RNA polymerase subunit delta (185 aa).

One can recognise an HTH HARE-type domain in the interval 14-81 (LSMIEVAHAI…GDNTWGLRAW (68 aa)). Residues 90-185 (ATVGENEEDE…DEEDEDEDDE (96 aa)) form a disordered region. Acidic residues-rich tracts occupy residues 117–167 (DTDD…DDGI) and 175–185 (HDEEDEDEDDE).

This sequence belongs to the RpoE family. In terms of assembly, RNAP is composed of a core of 2 alpha, a beta and a beta' subunits. The core is associated with a delta subunit and one of several sigma factors.

Its function is as follows. Participates in both the initiation and recycling phases of transcription. In the presence of the delta subunit, RNAP displays an increased specificity of transcription, a decreased affinity for nucleic acids, and an increased efficiency of RNA synthesis because of enhanced recycling. This is Probable DNA-directed RNA polymerase subunit delta from Limosilactobacillus reuteri (strain DSM 20016) (Lactobacillus reuteri).